The following is a 246-amino-acid chain: Putative S-adenosyl-L-methionine-dependent methyltransferase Mflv_0168 (246 aa).

S-adenosyl-L-methionine contacts are provided by residues Asp112 and Asp141–Leu142.

The protein belongs to the UPF0677 family.

In terms of biological role, exhibits S-adenosyl-L-methionine-dependent methyltransferase activity. This chain is Putative S-adenosyl-L-methionine-dependent methyltransferase Mflv_0168, found in Mycolicibacterium gilvum (strain PYR-GCK) (Mycobacterium gilvum (strain PYR-GCK)).